A 142-amino-acid polypeptide reads, in one-letter code: Large ribosomal subunit protein uL13 (142 aa).

It belongs to the universal ribosomal protein uL13 family. As to quaternary structure, part of the 50S ribosomal subunit.

Functionally, this protein is one of the early assembly proteins of the 50S ribosomal subunit, although it is not seen to bind rRNA by itself. It is important during the early stages of 50S assembly. In Azotobacter vinelandii (strain DJ / ATCC BAA-1303), this protein is Large ribosomal subunit protein uL13.